The sequence spans 663 residues: A-type ATP synthase subunit I (663 aa).

The next 7 membrane-spanning stretches (helical) occupy residues 376–396, 412–432, 468–488, 497–517, 534–554, 568–588, and 589–609; these read FFFGFMLTDFLYGLIVGIVAA, FAYILLWSAFFTMLLGALFGS, LAALAIGLAHLFLGYTLGFVI, GAVFEQLPWMIIIIGVALLAS, IALFAVGELVINGGLAALMII, ARLMALALATGGIAMVINVLV, and GMVWAIKFLYIGPIIGLIIFF.

Belongs to the V-ATPase 116 kDa subunit family. In terms of assembly, has multiple subunits with at least A(3), B(3), C, D, E, F, H, I and proteolipid K(x).

The protein resides in the cell membrane. In terms of biological role, component of the A-type ATP synthase that produces ATP from ADP in the presence of a proton gradient across the membrane. The polypeptide is A-type ATP synthase subunit I (Thermococcus kodakarensis (strain ATCC BAA-918 / JCM 12380 / KOD1) (Pyrococcus kodakaraensis (strain KOD1))).